The chain runs to 499 residues: Serine carboxypeptidase 1 (499 aa).

An N-terminal signal peptide occupies residues 1-30; it reads MARCRRRSGCTAGAALLLLLALALSGGGGA. Intrachain disulfides connect Cys92-Cys388, Cys256-Cys268, and Cys291-Cys355. N-linked (GlcNAc...) asparagine glycosylation is present at Asn148. The active site involves Ser188. The N-linked (GlcNAc...) asparagine glycan is linked to Asn262. A propeptide spans 297–351 (linker peptide); sequence IKEVNLQNSKLPQSFKDLGTTNKPFPVRTRMLGRAWPLRAPVKAGRVPSWQEVAS. A glycan (N-linked (GlcNAc...) asparagine) is linked at Asn407. Active-site residues include Asp423 and His476. The short motif at 497-499 is the Microbody targeting signal element; that stretch reads SKL.

The protein belongs to the peptidase S10 family. As to quaternary structure, carboxypeptidase I is a dimer, where each monomer is composed of two chains linked by disulfide bonds. In terms of processing, the linker peptide is endoproteolytically excised during enzyme maturation.

It localises to the secreted. It carries out the reaction Release of a C-terminal amino acid with broad specificity.. May be involved in the degradation of small peptides (2-5 residues) or in the degradation of storage proteins in the embryo. In Hordeum vulgare (Barley), this protein is Serine carboxypeptidase 1 (CBP1).